Here is a 377-residue protein sequence, read N- to C-terminus: Ipis-1 (377 aa).

2 N-linked (GlcNAc...) asparagine glycosylation sites follow: asparagine 11 and asparagine 226.

Belongs to the serpin family. Female salivary gland. Not detected in midgut and other tissues.

It is found in the secreted. Salivary protein with immunosuppressive properties that can modulate blood feeding of ticks on vertebrate species. Inhibits proliferation of bovine peripheral blood mononuclear cells (PBMCs). Inhibits IFN-gamma (IFNG) production by bovine PBMCs. The polypeptide is Ipis-1 (Ixodes persulcatus (Taiga tick)).